Consider the following 714-residue polypeptide: Fatty acid oxidation complex subunit alpha (714 aa).

The segment at 1–190 is enoyl-CoA hydratase; it reads MEMASAFTLN…KLGLVDDVVP (190 aa). The segment at 306 to 714 is 3-hydroxyacyl-CoA dehydrogenase; that stretch reads APLNSVGILG…FWKTTATDLQ (409 aa).

The protein in the N-terminal section; belongs to the enoyl-CoA hydratase/isomerase family. In the central section; belongs to the 3-hydroxyacyl-CoA dehydrogenase family. Heterotetramer of two alpha chains (FadJ) and two beta chains (FadI).

It is found in the cytoplasm. The catalysed reaction is a (3S)-3-hydroxyacyl-CoA = a (2E)-enoyl-CoA + H2O. The enzyme catalyses a 4-saturated-(3S)-3-hydroxyacyl-CoA = a (3E)-enoyl-CoA + H2O. It carries out the reaction a (3S)-3-hydroxyacyl-CoA + NAD(+) = a 3-oxoacyl-CoA + NADH + H(+). It catalyses the reaction (3S)-3-hydroxybutanoyl-CoA = (3R)-3-hydroxybutanoyl-CoA. It participates in lipid metabolism; fatty acid beta-oxidation. In terms of biological role, catalyzes the formation of a hydroxyacyl-CoA by addition of water on enoyl-CoA. Also exhibits 3-hydroxyacyl-CoA epimerase and 3-hydroxyacyl-CoA dehydrogenase activities. The chain is Fatty acid oxidation complex subunit alpha from Shigella boydii serotype 18 (strain CDC 3083-94 / BS512).